Reading from the N-terminus, the 152-residue chain is UPF0225 protein YchJ (152 aa).

Belongs to the UPF0225 family.

The chain is UPF0225 protein YchJ from Shigella dysenteriae serotype 1 (strain Sd197).